Here is an 82-residue protein sequence, read N- to C-terminus: Putative Fe(2+) transport protein A (82 aa).

This sequence belongs to the FeoA family.

Its function is as follows. Might be involved in Fe(2+) ion uptake. This Methanocaldococcus jannaschii (strain ATCC 43067 / DSM 2661 / JAL-1 / JCM 10045 / NBRC 100440) (Methanococcus jannaschii) protein is Putative Fe(2+) transport protein A.